A 513-amino-acid chain; its full sequence is GMP synthase [glutamine-hydrolyzing] (513 aa).

The Glutamine amidotransferase type-1 domain maps to 3–200 (SVLVLDFGSQ…LITIAGITPD (198 aa)). The Nucleophile role is filled by Cys-80. Active-site residues include His-174 and Glu-176. Positions 201–388 (WSSKSFIEHQ…LGIAEDILMR (188 aa)) constitute a GMPS ATP-PPase domain. 228–234 (SGGVDST) is an ATP binding site.

In terms of assembly, homodimer.

The catalysed reaction is XMP + L-glutamine + ATP + H2O = GMP + L-glutamate + AMP + diphosphate + 2 H(+). Its pathway is purine metabolism; GMP biosynthesis; GMP from XMP (L-Gln route): step 1/1. In terms of biological role, catalyzes the synthesis of GMP from XMP. The sequence is that of GMP synthase [glutamine-hydrolyzing] from Pelodictyon phaeoclathratiforme (strain DSM 5477 / BU-1).